The chain runs to 175 residues: MMTYIVFILSTIFVISFVGFSSKPSPIYGGVGLIVSGGVGCGIVMSFGGSFLGLMVFLIYLGGMLVVFGYTTAMATEQYPEVWVSNKVVMGAFISGLIVEVVFVLCVLNSEELKGLFELNGMGDWVIYSVEDSGVFSKEVMGVAALYSYGVWLVIVTGWSLLIGVIVVLEVTRGG.

A run of 5 helical transmembrane segments spans residues 1–21 (MMTY…VGFS), 25–45 (SPIY…GIVM), 47–67 (FGGS…MLVV), 88–108 (VVMG…LCVL), and 149–169 (YGVW…IVVL).

Belongs to the complex I subunit 6 family.

The protein resides in the mitochondrion membrane. The enzyme catalyses a ubiquinone + NADH + 5 H(+)(in) = a ubiquinol + NAD(+) + 4 H(+)(out). Its function is as follows. Core subunit of the mitochondrial membrane respiratory chain NADH dehydrogenase (Complex I) that is believed to belong to the minimal assembly required for catalysis. Complex I functions in the transfer of electrons from NADH to the respiratory chain. The immediate electron acceptor for the enzyme is believed to be ubiquinone. In Rhinolophus monoceros (Formosan lesser horseshoe bat), this protein is NADH-ubiquinone oxidoreductase chain 6 (MT-ND6).